The following is a 476-amino-acid chain: 3-isopropylmalate dehydratase large subunit (476 aa).

[4Fe-4S] cluster is bound by residues Cys357, Cys417, and Cys420.

It belongs to the aconitase/IPM isomerase family. LeuC type 1 subfamily. As to quaternary structure, heterodimer of LeuC and LeuD. [4Fe-4S] cluster is required as a cofactor.

It catalyses the reaction (2R,3S)-3-isopropylmalate = (2S)-2-isopropylmalate. Its pathway is amino-acid biosynthesis; L-leucine biosynthesis; L-leucine from 3-methyl-2-oxobutanoate: step 2/4. Catalyzes the isomerization between 2-isopropylmalate and 3-isopropylmalate, via the formation of 2-isopropylmaleate. The sequence is that of 3-isopropylmalate dehydratase large subunit from Mycobacterium avium (strain 104).